The sequence spans 383 residues: Trihelix transcription factor ASIL1 (383 aa).

4 disordered regions span residues 1–32 (MEDD…LPTN), 61–94 (HTPS…DDCW), 189–295 (IASS…SGVG), and 346–383 (EITQ…NVSS). Residues 66 to 88 (TGGGGSGNRNGRGGGGGSGGGGG) show a composition bias toward gly residues. The region spanning 94–153 (WSEEATKVLIEAWGDRFSEPGKGTLKQQHWKEVAEIVNKSRQCKYPKTDIQCKNRIDTVK) is the Myb-like domain. Residues 206 to 225 (NSRSSMFKRQTKGNQIVQQQ) show a composition bias toward polar residues. Residues 226–235 (QEKRGSDSMR) show a composition bias toward basic and acidic residues. Positions 228–241 (KRGSDSMRWHFRKR) match the Bipartite nuclear localization signal motif. Residues 246 to 262 (TESESDPEPEASPEESA) are compositionally biased toward acidic residues. Over residues 263 to 274 (ESLPPLQPIQPL) the composition is skewed to low complexity. Positions 304 to 365 (FTEAYEKAET…ERSRQRGERR (62 aa)) form a coiled coil. Residues 356–367 (ERSRQRGERRIV) show a composition bias toward basic and acidic residues.

It localises to the nucleus. Functionally, transcription repressor that binds specific DNA sequence such as the GT-box-like motif 5'-CGTGATT-3' in the AT2S3 promoter. Negative regulator of seed maturation genes during seed germination and seedling development. May target GT-box-containing embryonic genes by competing with the binding of transcriptional activators to this promoter region. Contributes to the maintenance and control of seed filling and may repress the maturation program during early embryogenesis. This is Trihelix transcription factor ASIL1 from Arabidopsis thaliana (Mouse-ear cress).